Reading from the N-terminus, the 465-residue chain is MRVLIIGGSIAGLTLAHCLEKAKIDYVLLEKKEEIAPQEGASIGILPNGGRIMEQLGLYHQIEQLIEPLARAHVTYPDGFHFTSQYPALLQQRFGYPLAFLDRQKLLQILAAGPVQSGRVKLGHQVVNIESTPDGVTVRTSHGHVYQGDLVVGADGVHSRVRAEMWRLATASQGEIFRSEYNKLTIDYACIFGISSPVDQLEPGEQITCYNDGWSILSVIGQNGRVFWFLFIKLDKESVYDGSRKNGPRFSPADARAHCERLAHEPVWNGVKFGHVWAQCEVFQMTPLEEGLFSKWYWRNIVCIGDSMHKFAPHIGQGANCAIEDAAQLSNRLQAWLYGCGPNDPPTASDLSEILAGFVEDRLRRLGPVAVAARSAMRLHARQGVKNWILGRYLLPYAGDKPADWASQGIAGGGVTLDFVEPPERSGPGWVQFSQPRKRPTFPLTVAGLCLVAIVIRMLHSTLTV.

An N-terminal signal peptide occupies residues 1–16 (MRVLIIGGSIAGLTLA). The FAD site is built by E30, G44, and R103. Residue Y210 is part of the active site. FAD-binding residues include D306 and A319. Residues 440 to 456 (PTFPLTVAGLCLVAIVI) traverse the membrane as a helical segment.

The protein belongs to the paxM FAD-dependent monooxygenase family. Requires FAD as cofactor.

The protein localises to the membrane. It catalyses the reaction 4-hydroxy-3-[(2E,6E)-farnesyl]-6-(pyridin-3-yl)-2H-pyran-2-one + NADPH + O2 + H(+) = 2-oxo-3-[(8S)-epoxy-(2E,6E)-farnesyl]-6-(pyridin-3-yl)-2H-pyran-4-olate + NADP(+) + H2O. The protein operates within secondary metabolite biosynthesis; terpenoid biosynthesis. Its function is as follows. FAD-dependent monooxygenase; part of the gene cluster that mediates the biosynthesis of pyripyropene A, a specific human acyl-coenzyme A:cholesterol acyltransferase 2 inhibitor. The first step of the pathway is the synthesis of nicotinyl-CoA from nicotinic acid by the nicotinic acid-CoA ligase pyr1. Nicotinyl-CoA is then a substrate of polyketide synthase pyr2 to produce 4-hydroxy-6-(3-pyridinyl)-2H-pyran-2-one (HPPO) which is further prenylated by the polyprenyl transferase pyr6 to yield farnesyl-HPPO. The next steps consist of an epoxidation of farnesyl-HPPO to epoxyfarnesyl-HPPO by FAD-dependent monooxygenase pyr5 and a cyclization of the terpenoid portion by the terpene cyclase pyr4 to yield deacetyl-pyripyropene E. The 2 cytochrome P450 monooxygenases pyr3 and pyr9, and the 2 acetyltransferases pyr7 and pyr8 are involved in the conversion of deacetyl-pyripyropene E into pyripyropene A through several cycles of oxidation and acetylation steps. Pyr7 acetylates deacetyl-pyripyropene E to pyripyropene E which is oxidized to 11-deacetyl-pyripyropene O by pyr3, which is in turn acetylated into pyripyropene O by pyr8. Pyripyropene O is then oxidized to deacetyl-pyripyropene A by pyr9. Deacetyl-pyripyropene A is finally acetylated to pyripyropene A by pyr8. This Aspergillus fumigatus (strain ATCC MYA-4609 / CBS 101355 / FGSC A1100 / Af293) (Neosartorya fumigata) protein is FAD-dependent monooxygenase pyr5.